The chain runs to 138 residues: Large-conductance mechanosensitive channel (138 aa).

A run of 3 helical transmembrane segments spans residues 19 to 39 (VGVI…GDVI), 40 to 60 (MPVI…IGLS), and 81 to 101 (GSFL…FIVI).

This sequence belongs to the MscL family. Homopentamer.

The protein localises to the cell inner membrane. In terms of biological role, channel that opens in response to stretch forces in the membrane lipid bilayer. May participate in the regulation of osmotic pressure changes within the cell. The chain is Large-conductance mechanosensitive channel from Afipia carboxidovorans (strain ATCC 49405 / DSM 1227 / KCTC 32145 / OM5) (Oligotropha carboxidovorans).